The following is a 67-amino-acid chain: Large ribosomal subunit protein bL31 (67 aa).

Residues Cys16, Cys18, Cys36, and Cys39 each coordinate Zn(2+).

The protein belongs to the bacterial ribosomal protein bL31 family. Type A subfamily. Part of the 50S ribosomal subunit. It depends on Zn(2+) as a cofactor.

Functionally, binds the 23S rRNA. The chain is Large ribosomal subunit protein bL31 from Desulforudis audaxviator (strain MP104C).